The chain runs to 229 residues: Endonuclease V (229 aa).

Mg(2+)-binding residues include Asp-46 and Asp-114.

Belongs to the endonuclease V family. The cofactor is Mg(2+).

It localises to the cytoplasm. The catalysed reaction is Endonucleolytic cleavage at apurinic or apyrimidinic sites to products with a 5'-phosphate.. In terms of biological role, DNA repair enzyme involved in the repair of deaminated bases. Selectively cleaves double-stranded DNA at the second phosphodiester bond 3' to a deoxyinosine leaving behind the intact lesion on the nicked DNA. This is Endonuclease V from Streptomyces avermitilis (strain ATCC 31267 / DSM 46492 / JCM 5070 / NBRC 14893 / NCIMB 12804 / NRRL 8165 / MA-4680).